Reading from the N-terminus, the 245-residue chain is 2,3-bisphosphoglycerate-dependent phosphoglycerate mutase (245 aa).

Residues 9–16 (RHGESEWN), 22–23 (TG), arginine 61, 88–91 (ERHY), lysine 99, 115–116 (RR), and 181–182 (GN) each bind substrate. The active-site Tele-phosphohistidine intermediate is the histidine 10. The Proton donor/acceptor role is filled by glutamate 88.

Belongs to the phosphoglycerate mutase family. BPG-dependent PGAM subfamily.

The catalysed reaction is (2R)-2-phosphoglycerate = (2R)-3-phosphoglycerate. The protein operates within carbohydrate degradation; glycolysis; pyruvate from D-glyceraldehyde 3-phosphate: step 3/5. In terms of biological role, catalyzes the interconversion of 2-phosphoglycerate and 3-phosphoglycerate. The polypeptide is 2,3-bisphosphoglycerate-dependent phosphoglycerate mutase (Nocardia farcinica (strain IFM 10152)).